Consider the following 345-residue polypeptide: Dihydroorotate dehydrogenase (quinone) (345 aa).

Residues 65-69 and Thr89 contribute to the FMN site; that span reads AGLDK. Lys69 is a binding site for substrate. Residue 114 to 118 participates in substrate binding; sequence NRMGF. The FMN site is built by Asn142 and Asn175. Asn175 lines the substrate pocket. Residue Ser178 is the Nucleophile of the active site. Residue Asn180 participates in substrate binding. Residues Lys220 and Thr248 each coordinate FMN. 249 to 250 is a substrate binding site; the sequence is NT. Residues Gly271, Gly300, and 321-322 contribute to the FMN site; that span reads YT.

The protein belongs to the dihydroorotate dehydrogenase family. Type 2 subfamily. In terms of assembly, monomer. Requires FMN as cofactor.

It is found in the cell membrane. It catalyses the reaction (S)-dihydroorotate + a quinone = orotate + a quinol. Its pathway is pyrimidine metabolism; UMP biosynthesis via de novo pathway; orotate from (S)-dihydroorotate (quinone route): step 1/1. Functionally, catalyzes the conversion of dihydroorotate to orotate with quinone as electron acceptor. The protein is Dihydroorotate dehydrogenase (quinone) of Burkholderia lata (strain ATCC 17760 / DSM 23089 / LMG 22485 / NCIMB 9086 / R18194 / 383).